We begin with the raw amino-acid sequence, 338 residues long: GTPase Obg (338 aa).

The region spanning 1-159 is the Obg domain; the sequence is MSFIDEVKIN…RWIRMELKLM (159 aa). The tract at residues 58-79 is disordered; the sequence is DLRQHPHQKAGRGKNGMGSDRH. The OBG-type G domain maps to 160–331; it reads ADVGLLGMPS…LLDDIAFNLW (172 aa). Residues 166–173, 191–195, 213–216, 283–286, and 312–314 contribute to the GTP site; these read GMPSVGKS, FTTLK, DIPG, NKID, and SAA. Residues Ser173 and Thr193 each contribute to the Mg(2+) site.

The protein belongs to the TRAFAC class OBG-HflX-like GTPase superfamily. OBG GTPase family. In terms of assembly, monomer. Mg(2+) serves as cofactor.

The protein localises to the cytoplasm. In terms of biological role, an essential GTPase which binds GTP, GDP and possibly (p)ppGpp with moderate affinity, with high nucleotide exchange rates and a fairly low GTP hydrolysis rate. Plays a role in control of the cell cycle, stress response, ribosome biogenesis and in those bacteria that undergo differentiation, in morphogenesis control. This Citrifermentans bemidjiense (strain ATCC BAA-1014 / DSM 16622 / JCM 12645 / Bem) (Geobacter bemidjiensis) protein is GTPase Obg.